A 316-amino-acid chain; its full sequence is HTH-type transcriptional regulator cbl (316 aa).

Positions M1–M59 constitute an HTH lysR-type domain. Residues L19–R38 constitute a DNA-binding region (H-T-H motif).

It belongs to the LysR transcriptional regulatory family.

Its function is as follows. May be an accessory regulatory protein within the cys regulon. In Klebsiella aerogenes (Enterobacter aerogenes), this protein is HTH-type transcriptional regulator cbl (cbl).